The primary structure comprises 609 residues: UvrABC system protein C (609 aa).

The 79-residue stretch at 16 to 94 (SSAGVYRMYD…IKQYMPKYNV (79 aa)) folds into the GIY-YIG domain. Residues 203–238 (QQVISALVDKMELAAERQAYEQAARFRDQIMALRKV) enclose the UVR domain.

The protein belongs to the UvrC family. Interacts with UvrB in an incision complex.

The protein localises to the cytoplasm. Its function is as follows. The UvrABC repair system catalyzes the recognition and processing of DNA lesions. UvrC both incises the 5' and 3' sides of the lesion. The N-terminal half is responsible for the 3' incision and the C-terminal half is responsible for the 5' incision. This is UvrABC system protein C from Shewanella baltica (strain OS185).